The primary structure comprises 633 residues: General amino acid permease AGP1 (633 aa).

The Cytoplasmic portion of the chain corresponds to 1 to 124; that stretch reads MSSSKSLYEL…SLKKTIQPRH (124 aa). Ser6 is subject to Phosphoserine. A Glycyl lysine isopeptide (Lys-Gly) (interchain with G-Cter in ubiquitin) cross-link involves residue Lys11. Disordered regions lie at residues 32-52 and 86-116; these read FETG…EQHN and ISPS…SDSL. Residues 34–52 are compositionally biased toward polar residues; that stretch reads TGSNDRPSSQPHLGYEQHN. The helical transmembrane segment at 125–145 threads the bilayer; the sequence is VLMIALGTGIGTGLLVGNGTA. Over 146–148 the chain is Extracellular; the sequence is LVH. Residues 149-169 traverse the membrane as a helical segment; sequence AGPAGLLIGYAIMGSILYCII. Residues 170–197 are Cytoplasmic-facing; sequence QACGEMALVYSNLTGGYNAYPSFLVDDG. The chain crosses the membrane as a helical span at residues 198 to 218; it reads FGFAVAWVYCLQWLCVCPLEL. The Extracellular segment spans residues 219-231; that stretch reads VTASMTIKYWTTS. Residues 232–252 form a helical membrane-spanning segment; the sequence is VNPDVFVIIFYVLVITINIFG. Residues 253–260 are Cytoplasmic-facing; that stretch reads ARGYAEAE. A helical membrane pass occupies residues 261 to 281; the sequence is FFFNCCKILMMTGFFILGIII. Residues 282-313 are Extracellular-facing; sequence DVGGAGNDGFIGGKYWHDPGAFNGKHAIDRFK. The helical transmembrane segment at 314 to 334 threads the bilayer; sequence GVAATLVTAAFAFGGSEFIAI. Residues 335 to 352 are Cytoplasmic-facing; the sequence is TTAEQSNPRKAIPGAAKQ. The helical transmembrane segment at 353–373 threads the bilayer; sequence MIYRILFLFLATIILLGFLVP. Topologically, residues 374–402 are extracellular; that stretch reads YNSDQLLGSTGGGTKASPYVIAVASHGVR. A helical transmembrane segment spans residues 403-425; it reads VVPHFINAVILLSVLSMANSSFY. The Cytoplasmic segment spans residues 426–452; that stretch reads SSARLFLTLSEQGYAPKVFSYIDRAGR. Residues 453 to 473 form a helical membrane-spanning segment; the sequence is PLIAMGVSALFAVIAFCAASP. The Extracellular segment spans residues 474 to 477; the sequence is KEEQ. The helical transmembrane segment at 478–498 threads the bilayer; it reads VFTWLLAISGLSQLFTWTAIC. Topologically, residues 499–531 are cytoplasmic; the sequence is LSHLRFRRAMKVQGRSLGELGFKSQTGVWGSAY. The chain crosses the membrane as a helical span at residues 532 to 552; the sequence is ACIMMILILIAQFWVAIAPIG. Topologically, residues 553-560 are extracellular; it reads EGKLDAQA. The chain crosses the membrane as a helical span at residues 561–581; that stretch reads FFENYLAMPILIALYVGYKVW. Topologically, residues 582-633 are cytoplasmic; sequence HKDWKLFIRADKIDLDSHRQIFDEELIKQEDEEYRERLRNGPYWKRVVAFWC. Cys633 carries S-palmitoyl cysteine lipidation.

Belongs to the amino acid-polyamine-organocation (APC) superfamily. YAT (TC 2.A.3.10) family. In terms of processing, palmitoylated by PFA4.

Its subcellular location is the cell membrane. Its function is as follows. Broad substrate range permease which transports asparagine and glutamine with intermediate specificity. Also transports Ala, Cys, Gly, Ile, Leu, Met, Phe, Ser, Thr, Tyr and Val. Important for the utilization of amino acids as a nitrogen source. In Saccharomyces cerevisiae (strain ATCC 204508 / S288c) (Baker's yeast), this protein is General amino acid permease AGP1 (AGP1).